The sequence spans 248 residues: Probable transcriptional regulatory protein Bind_0345 (248 aa).

The protein belongs to the TACO1 family.

It localises to the cytoplasm. This is Probable transcriptional regulatory protein Bind_0345 from Beijerinckia indica subsp. indica (strain ATCC 9039 / DSM 1715 / NCIMB 8712).